The chain runs to 1335 residues: Regulatory-associated protein of mTOR (1335 aa).

Phosphoserine is present on residues S44 and S122. Phosphoserine; by MAPK8 is present on S696. O-linked (GlcNAc) threonine glycosylation is present at T700. T706 bears the Phosphothreonine; by MAPK8 mark. A phosphoserine; by RPS6KA1 mark is found at S719 and S721. S722 bears the Phosphoserine; by AMPK and RPS6KA1 mark. At S738 the chain carries Phosphoserine. The segment at 749–771 (GSSVAFSPGNLSTSSSASSTLGS) is disordered. Residues 755-771 (SPGNLSTSSSASSTLGS) show a composition bias toward low complexity. Position 791 is a phosphoserine (S791). At S792 the chain carries Phosphoserine; by AMPK. Phosphoserine occurs at positions 836 and 855. Polar residues predominate over residues 853–866 (TSSLTQSAPASPTN). Positions 853 to 942 (TSSLTQSAPA…GPDQTTDDAD (90 aa)) are disordered. S859 carries the phosphoserine; by MTOR modification. Residue S863 is modified to Phosphoserine; by MAPK8, MTOR and NLK. The residue at position 865 (T865) is a Phosphothreonine. A Phosphoserine modification is found at S877. The segment covering 877 to 887 (SPPASSTSSCS) has biased composition (low complexity). Positions 888-898 (LTNDVAKQTVS) are enriched in polar residues. Glycyl lysine isopeptide (Lys-Gly) (interchain with G-Cter in ubiquitin) cross-links involve residues K932 and K948. S982 is modified (phosphoserine). WD repeat units lie at residues 1020–1061 (NRNP…DYFH), 1065–1106 (PRYT…EKNP), 1121–1160 (TTRG…KVQD), 1164–1203 (GADS…SECR), 1209–1249 (EHTA…SVNV), 1251–1291 (QIVK…NNIK), and 1299–1335 (QRVG…KRVR). K1097 is subject to N6-acetyllysine.

Belongs to the WD repeat RAPTOR family. Part of the mechanistic target of rapamycin complex 1 (mTORC1) which contains MTOR, MLST8 and RPTOR. mTORC1 associates with AKT1S1/PRAS40, which inhibits its activity. mTORC1 associates with DEPTOR, which regulates its activity. mTORC1 binds to and is inhibited by FKBP12-rapamycin. Forms a complex with MTOR under both leucine-rich and -poor conditions. Interacts with (via TOS motifs) EIF4EBP1 and RPS6KB1; interaction is independent of its association with MTOR. Binds preferentially to poorly or non-phosphorylated forms of EIF4EBP1, and this binding is critical to the ability of MTOR to catalyze phosphorylation. Interacts with ULK1 in a nutrient-dependent manner; the interaction is reduced during starvation. Interacts with GTP-bound form of RagA/RRAGA or RagB/RRAGB and GDP-bound form of RagC/RRAGC or RagD/RRAGD, promoting recruitment of mTORC1 to the lysosomes. Interacts (when phosphorylated by AMPK) with 14-3-3 protein, leading to inhibition of its activity. Interacts with SPAG5; SPAG5 competes with MTOR for RPTOR-binding, resulting in decreased mTORC1 formation. Interacts with WAC; WAC positively regulates MTOR activity by promoting the assembly of the TTT complex composed of TELO2, TTI1 and TTI2 and the RUVBL complex composed of RUVBL1 and RUVBL2 into the TTT-RUVBL complex which leads to the dimerization of the mTORC1 complex and its subsequent activation. Interacts with G3BP1. The complex formed with G3BP1 and SPAG5 is increased by oxidative stress. Interacts with HTR6. Interacts with PIH1D1. Interacts with LARP1. Interacts with BRAT1. Interacts with SIK3. Interacts with SLC38A7; this interaction mediates the recruitment of mTORC1 to the lysosome and its subsequent activation. In terms of processing, insulin-stimulated phosphorylation at Ser-863 by MTOR and MAPK8 regulates mTORC1 activity. Phosphorylated at Ser-863 by NLK in response to stress, disrupting the interaction with small GTPases Rag (RagA/RRAGA, RagB/RRAGB, RagC/RRAGC and/or RagD/RRAGD), thereby preventing lysosome recruitment and activation of the mTORC1 complex. Osmotic stress also induces phosphorylation at Ser-696, Thr-706 and Ser-863 by MAPK8. Ser-863 phosphorylation is required for phosphorylation at Ser-855 and Ser-859. In response to nutrient limitation, phosphorylated at Ser-722 and Ser-792 by AMPK; phosphorylation promotes interaction with 14-3-3 proteins, leading to negative regulation of the mTORC1 complex. Phosphorylation at Ser-722 and Ser-792 by AMPK in response to glucose starvation inhibits O-GlcNAcylation by OGT and subsequent activation of mTORC1. In response to growth factors, phosphorylated at Ser-719, Ser-721 and Ser-722 by RPS6KA1, which stimulates mTORC1 activity. Phosphorylation at Ser-791 by PKA downstream of cAMP inhibits the mTORC1 complex. Phosphorylated at Ser-877 by TBK1, leading to negative regulation of the mTORC1 complex. Post-translationally, O-GlcNAcylated by OGT upon glucose sufficiency, promoting interaction with small GTPases Rag (RagA/RRAGA, RagB/RRAGB, RagC/RRAGC and/or RagD/RRAGD) and subsequent recruitment of mTORC1 to lysosomal membranes, leading to activation of the mTORC1 complex. Phosphorylation at Ser-722 and Ser-792 by AMPK in response to glucose starvation inhibits O-GlcNAcylation. Acetylation at Lys-1097 by EP300/p300 in response to leucine metabolite acetyl-coA promotes its activity, leading to activation of the mTORC1 complex. Acetylation is decreased in response to fasting. Phosphorylated at Ser-877 by TBK1, leading to negative regulation of the mTORC1 complex. In terms of processing, ubiquitinated, leading to its degradation by the proteasome. Deubiquitinated by OTUB1 via a non-catalytic mechanism. Ubiquitinated by an E3 ubiquitin ligase complex containing VHL.

It is found in the cytoplasm. The protein localises to the lysosome. Its subcellular location is the cytoplasmic granule. Its function is as follows. Component of the mechanistic target of rapamycin complex 1 (mTORC1), an evolutionarily conserved central nutrient sensor that stimulates anabolic reactions and macromolecule biosynthesis to promote cellular biomass generation and growth. In response to nutrients, growth factors or amino acids, mTORC1 is recruited to the lysosome membrane and promotes protein, lipid and nucleotide synthesis by phosphorylating several substrates, such as ribosomal protein S6 kinase (RPS6KB1 and RPS6KB2) and EIF4EBP1 (4E-BP1). In the same time, it inhibits catabolic pathways by phosphorylating the autophagy initiation components ULK1 and ATG13, as well as transcription factor TFEB, a master regulators of lysosomal biogenesis and autophagy. The mTORC1 complex is inhibited in response to starvation and amino acid depletion. Within the mTORC1 complex, RPTOR acts both as a molecular adapter, which (1) mediates recruitment of mTORC1 to lysosomal membranes via interaction with small GTPases Rag (RagA/RRAGA, RagB/RRAGB, RagC/RRAGC and/or RagD/RRAGD), and a (2) substrate-specific adapter, which promotes substrate specificity by binding to TOS motif-containing proteins and direct them towards the active site of the MTOR kinase domain for phosphorylation. mTORC1 complex regulates many cellular processes, such as odontoblast and osteoclast differentiation or neuronal transmission. mTORC1 complex in excitatory neuronal transmission is required for the prosocial behavior induced by the psychoactive substance lysergic acid diethylamide (LSD). The chain is Regulatory-associated protein of mTOR from Mus musculus (Mouse).